Here is a 570-residue protein sequence, read N- to C-terminus: MRWSRYFLYTEKEEPKEAEAPSHRLLLKAGFIKQVSAGIYELLPPAYKVLKKVESIIRKEMDRSGAQELLLTVLNPKELWEETGRWETYGEELFKLKDRNGREYCLGPTHEEEITDLVRRVVRSYRQLPVILYQIQVKFRDEKRPRFGLIRAREFIMKDAYSFDTDDMSAMISYEAMKFAYQRIFNKLRLNVIMAEADVGQIGGKMSHEFIAFTDYGEAKVAYCENCGYAANAEIVPLPKPEEEKEEEKPMEKVHTPNVHTIEELSKFLDVHPSKIMKAVLYIVNEKEPVLVLIRGDREIDENKLEKVLGTDNFRLATDEEVQELLGTKKGFIGIFNLPENIKVLWDNSLYGVKNLVVALNEPDWHYINVNPGRDFQYGEFVDVAEVREGDPCPKCGSPLKVRRGLELGHIFLLGTRYSEPMKAYFTDRDGKEKPIIMGCYGIGVSRILAALVEQYHDDKGIKWPTPVAPFELDIILLNTKDEEMKNVAEKLYLEAEEKGIDVIFDDREESPGFKFADADLVGFPYRIVVGKKVKEGKVEVQSRHTGEKWDVEIEKAIDFVKEKIEEDKK.

This sequence belongs to the class-II aminoacyl-tRNA synthetase family. ProS type 1 subfamily. In terms of assembly, homodimer.

Its subcellular location is the cytoplasm. The catalysed reaction is tRNA(Pro) + L-proline + ATP = L-prolyl-tRNA(Pro) + AMP + diphosphate. Functionally, catalyzes the attachment of proline to tRNA(Pro) in a two-step reaction: proline is first activated by ATP to form Pro-AMP and then transferred to the acceptor end of tRNA(Pro). As ProRS can inadvertently accommodate and process non-cognate amino acids such as alanine and cysteine, to avoid such errors it has two additional distinct editing activities against alanine. One activity is designated as 'pretransfer' editing and involves the tRNA(Pro)-independent hydrolysis of activated Ala-AMP. The other activity is designated 'posttransfer' editing and involves deacylation of mischarged Ala-tRNA(Pro). The misacylated Cys-tRNA(Pro) is not edited by ProRS. In Aquifex aeolicus (strain VF5), this protein is Proline--tRNA ligase (proS).